The following is a 413-amino-acid chain: Tyrosine--tRNA ligase (413 aa).

A 'HIGH' region motif is present at residues 60 to 69 (PTAPDIHIGH). Positions 244-248 (KMSKS) match the 'KMSKS' region motif. Lys-247 contacts ATP. In terms of domain architecture, S4 RNA-binding spans 352-412 (LGIAQLLKQA…GKRRFARVTL (61 aa)).

This sequence belongs to the class-I aminoacyl-tRNA synthetase family. TyrS type 2 subfamily. In terms of assembly, homodimer.

It localises to the cytoplasm. The catalysed reaction is tRNA(Tyr) + L-tyrosine + ATP = L-tyrosyl-tRNA(Tyr) + AMP + diphosphate + H(+). In terms of biological role, catalyzes the attachment of tyrosine to tRNA(Tyr) in a two-step reaction: tyrosine is first activated by ATP to form Tyr-AMP and then transferred to the acceptor end of tRNA(Tyr). The chain is Tyrosine--tRNA ligase from Cupriavidus pinatubonensis (strain JMP 134 / LMG 1197) (Cupriavidus necator (strain JMP 134)).